We begin with the raw amino-acid sequence, 365 residues long: MMSGSRLASRLIIIFSIISTSFFTVESIRLFPDSFDDASSDLMEAPAYQNGLDCSVLAKNRLLLACDPSAVHIAMTLDPAYLRGTVSAVHSILKHTSCPENIFFHFIASGTSQGSLAKTLSSVFPSLSFKVYTFEETTVKNLISSSIRQALDSPLNYARSYLSEILSSCVSRVIYLDSDVIVVDDIQKLWKISLSGSRTIGAPEYCHANFTKYFTDSFWSDQKLSSVFDSKTPCYFNTGVMVIDLERWREGDYTRKIENWMKIQKEDKRIYELGSLPPFLLVFGGDIEAIDHQWNQHGLGGDNIVSSCRSLHPGPVSLIHWSGKGKPWVRLDDGKPCPIDYLWAPYDLHKSQRQYLQYNQELEIL.

Residues 1–10 (MMSGSRLASR) are Cytoplasmic-facing. The chain crosses the membrane as a helical; Signal-anchor for type II membrane protein span at residues 11-31 (LIIIFSIISTSFFTVESIRLF). At 32 to 365 (PDSFDDASSD…LQYNQELEIL (334 aa)) the chain is on the lumenal side. Asparagine 209 carries an N-linked (GlcNAc...) asparagine glycan.

Belongs to the glycosyltransferase 8 family.

Its subcellular location is the golgi apparatus membrane. It participates in glycan metabolism; pectin biosynthesis. Its function is as follows. May be involved in pectin and/or xylans biosynthesis in cell walls. The protein is Probable galacturonosyltransferase-like 10 (GATL10) of Arabidopsis thaliana (Mouse-ear cress).